The primary structure comprises 277 residues: MQQYHDALQHILDHGVETTDRTGTGTLSCFGMQQRYDLAEGFPLVTTKKLHLRSIIHELLWFLSGDTNIRYLKENGVSIWDEWADENGDLGPVYGYQWRKFPRLELAEGTLGDEPLYRAGTVDQISELLDMIRKSPDSRRLIVTAWNPGDVPDMALPPCHSLWQLRILGGKMHLQLYQRSADMFLGVPFNIASYALLLHMLAHVTGYEVGSFVHTMGDAHIYSNHMEQVKLQLSRSPKSLPQLRIARDVSSIFDFKYEDFEILGYDPDPVIKAPVAV.

Residue arginine 21 participates in dUMP binding. Histidine 51 is a binding site for (6R)-5,10-methylene-5,6,7,8-tetrahydrofolate. Residue 139–140 participates in dUMP binding; sequence RR. The active-site Nucleophile is cysteine 159. DUMP is bound by residues 179–182, asparagine 190, and 220–222; these read RSAD and HIY. Aspartate 182 is a binding site for (6R)-5,10-methylene-5,6,7,8-tetrahydrofolate. Alanine 276 is a (6R)-5,10-methylene-5,6,7,8-tetrahydrofolate binding site.

Belongs to the thymidylate synthase family. Bacterial-type ThyA subfamily. As to quaternary structure, homodimer.

The protein resides in the cytoplasm. The enzyme catalyses dUMP + (6R)-5,10-methylene-5,6,7,8-tetrahydrofolate = 7,8-dihydrofolate + dTMP. Its pathway is pyrimidine metabolism; dTTP biosynthesis. Functionally, catalyzes the reductive methylation of 2'-deoxyuridine-5'-monophosphate (dUMP) to 2'-deoxythymidine-5'-monophosphate (dTMP) while utilizing 5,10-methylenetetrahydrofolate (mTHF) as the methyl donor and reductant in the reaction, yielding dihydrofolate (DHF) as a by-product. This enzymatic reaction provides an intracellular de novo source of dTMP, an essential precursor for DNA biosynthesis. The sequence is that of Thymidylate synthase from Ruegeria sp. (strain TM1040) (Silicibacter sp.).